Reading from the N-terminus, the 366-residue chain is Protein RecA (366 aa).

81-88 (GPESSGKT) is an ATP binding site.

This sequence belongs to the RecA family.

Its subcellular location is the cytoplasm. Functionally, can catalyze the hydrolysis of ATP in the presence of single-stranded DNA, the ATP-dependent uptake of single-stranded DNA by duplex DNA, and the ATP-dependent hybridization of homologous single-stranded DNAs. It interacts with LexA causing its activation and leading to its autocatalytic cleavage. This chain is Protein RecA, found in Leptospira interrogans serogroup Icterohaemorrhagiae serovar copenhageni (strain Fiocruz L1-130).